Reading from the N-terminus, the 620-residue chain is Siderophore iron transporter ARN2 (620 aa).

The segment at 1-42 (MIEVPEDNRSSQTKRKNTEKNCNELMVDEKMDDDSSPRDEMK) is disordered. The segment covering 16–42 (KNTEKNCNELMVDEKMDDDSSPRDEMK) has biased composition (basic and acidic residues). Transmembrane regions (helical) follow at residues 71–93 (IFLF…RGTY), 106–128 (LIST…FGGL), 135–152 (LTLF…TIIQ), 162–184 (AAGA…LMLS), 191–213 (WRLF…SGSV), 223–245 (WSWN…ILCM), 286–308 (VVGV…LAGG), 318–335 (IIGP…FIYW), 355–377 (VWAP…GYLY), 392–414 (TRII…LIVT), 421–438 (SYII…GLFY), 448–470 (GGII…PTIV), 491–513 (VFRI…SLYP), and 561–578 (VIVA…TFCV).

The protein belongs to the major facilitator superfamily.

The protein localises to the endosome membrane. In terms of biological role, involved in the transport of siderophore triacestylfusarinine C and so has a role in iron homeostasis. The chain is Siderophore iron transporter ARN2 (ARN2) from Saccharomyces cerevisiae (strain ATCC 204508 / S288c) (Baker's yeast).